Here is a 474-residue protein sequence, read N- to C-terminus: Selection and upkeep of intraepithelial T-cells protein 4 (474 aa).

An N-terminal signal peptide occupies residues 1-25 (MGATEVLTSYCVVLCLLQMVALSSG). Residues 26 to 241 (HFTVIGSQRP…VLSGELFSWK (216 aa)) lie on the Extracellular side of the membrane. The 114-residue stretch at 27–140 (FTVIGSQRPI…EEHITEVKVT (114 aa)) folds into the Ig-like V-type domain. Intrachain disulfides connect C48/C122 and C162/C216. Residues N111 and N199 are each glycosylated (N-linked (GlcNAc...) asparagine). An Ig-like C1-type domain is found at 141–234 (ATSSDIQILM…QEQSINIVLS (94 aa)). A helical transmembrane segment spans residues 242-262 (IVWIMILSTISFVMIDFCMTY). Over 263–298 (CVQQQLIHEESLSTVDNDQCESDQSEGTCYKRNYPW) the chain is Cytoplasmic. A helical membrane pass occupies residues 299–319 (IIIAVVPIISVFAIIGVMLFL). Topologically, residues 320–341 (HLEQRVTILEQHFELDTLWLED) are extracellular. The chain crosses the membrane as a helical span at residues 342-362 (ISVILCVVIVSNINLIPLIYF). The Cytoplasmic portion of the chain corresponds to 363 to 381 (RLHEHVPRFKDRSPILNKA). A helical membrane pass occupies residues 382-402 (VVFLHFIYFSIVCGTILLVHL). Topologically, residues 403–420 (QLRNKVSISDSLFSLYNS) are extracellular. The helical transmembrane segment at 421–441 (WLTDISMILGFLLSIFIVTTI) threads the bilayer. The Cytoplasmic segment spans residues 442–474 (AKSSLFNKKWCIGLCIHMKEAEATGGPCEGEEL).

It belongs to the SKINT family. In terms of tissue distribution, expressed in skin, thymus and, to a lower extent, bladder and testis.

Its subcellular location is the membrane. In terms of biological role, may act by engaging a cell surface molecule on immature T-cells in the embryonic thymus. The sequence is that of Selection and upkeep of intraepithelial T-cells protein 4 (Skint4) from Mus musculus (Mouse).